Consider the following 292-residue polypeptide: 4-hydroxybenzoate solanesyltransferase (292 aa).

9 helical membrane passes run 28-48 (LILM…LPPL), 49-69 (PLLG…CVVN), 97-117 (VGIG…FYLT), 118-138 (PLSF…PGAK), 140-160 (VFPV…LISW), 172-192 (WVLW…YAMA), 217-237 (VGIF…ILML), 239-259 (PLYW…YIQL), and 272-292 (IFGQ…LGWL).

The protein belongs to the UbiA prenyltransferase family. It depends on Mg(2+) as a cofactor.

It is found in the cell inner membrane. The catalysed reaction is all-trans-nonaprenyl diphosphate + 4-hydroxybenzoate = 4-hydroxy-3-(all-trans-nonaprenyl)benzoate + diphosphate. Functionally, catalyzes the prenylation of para-hydroxybenzoate (PHB) with an all-trans polyprenyl group. Mediates the second step in the final reaction sequence of plastoquinone-9 (PQ-9) biosynthesis, which is the condensation of the polyisoprenoid side chain with PHB, generating the first membrane-bound Q intermediate 4-hydroxy-3-solanesylbenzoate. In Synechocystis sp. (strain ATCC 27184 / PCC 6803 / Kazusa), this protein is 4-hydroxybenzoate solanesyltransferase.